A 522-amino-acid chain; its full sequence is Tetratricopeptide repeat and J domain-containing co-chaperone DNJ1 (522 aa).

The first 22 residues, 1 to 22, serve as a signal peptide directing secretion; it reads MKGFLLVALPVLFLSLSTQVFG. TPR repeat units follow at residues 29-62, 63-96, 97-130, 142-175, 210-243, 256-289, and 356-389; these read AAQI…DPTG, YANY…NPGF, VQAH…KSDS, GEAA…GPNS, TYLP…DPDS, LEKD…LVRF, and VDSW…SGRS. A J domain is found at 410-471; sequence DYYKVLGVPR…ELRQRYDNGD (62 aa). Residues 465–494 are disordered; it reads QRYDNGDDPNDPTGGQQHNPFAHHGGGMPF.

Its subcellular location is the endoplasmic reticulum lumen. Endoplasmic reticulum co-chaperone crucial for survival and virulence factor production at elevated temperatures representative of febrile patients during infection. Contributes to virulence in a mouse model of cryptococcosis. With chaperone CNE1, coordinately maintains ER homeostasis and contributes to maintenance of cell wall architecture. This chain is Tetratricopeptide repeat and J domain-containing co-chaperone DNJ1, found in Cryptococcus neoformans var. grubii serotype A (strain H99 / ATCC 208821 / CBS 10515 / FGSC 9487) (Filobasidiella neoformans var. grubii).